The chain runs to 263 residues: tRNA pseudouridine synthase A (263 aa).

The active-site Nucleophile is D57. Y115 serves as a coordination point for substrate.

Belongs to the tRNA pseudouridine synthase TruA family. Homodimer.

It catalyses the reaction uridine(38/39/40) in tRNA = pseudouridine(38/39/40) in tRNA. Its function is as follows. Formation of pseudouridine at positions 38, 39 and 40 in the anticodon stem and loop of transfer RNAs. In Buchnera aphidicola subsp. Schizaphis graminum (strain Sg), this protein is tRNA pseudouridine synthase A.